The chain runs to 492 residues: Homoserine O-acetyltransferase (492 aa).

The 308-residue stretch at 47–354 folds into the AB hydrolase-1 domain; sequence NVILVCHALT…NYGHDAFLLE (308 aa). The Nucleophile role is filled by serine 152. Position 221 (arginine 221) interacts with substrate. Active-site residues include aspartate 315 and histidine 348. Aspartate 349 is a binding site for substrate. CBS domains follow at residues 375–432 and 436–492; these read MKLD…FTTL and LTKN…HRCT.

It belongs to the AB hydrolase superfamily. MetX family. Homodimer.

It localises to the cytoplasm. It catalyses the reaction L-homoserine + acetyl-CoA = O-acetyl-L-homoserine + CoA. It participates in amino-acid biosynthesis; L-methionine biosynthesis via de novo pathway; O-acetyl-L-homoserine from L-homoserine: step 1/1. In terms of biological role, transfers an acetyl group from acetyl-CoA to L-homoserine, forming acetyl-L-homoserine. This is Homoserine O-acetyltransferase from Methanosalsum zhilinae (strain DSM 4017 / NBRC 107636 / OCM 62 / WeN5) (Methanohalophilus zhilinae).